The chain runs to 704 residues: Phosphate acetyltransferase (704 aa).

Residues 380-704 are phosphate acetyltransferase; it reads FNLIEKAKRN…IQAQAEKGLI (325 aa).

In the N-terminal section; belongs to the CobB/CobQ family. It in the C-terminal section; belongs to the phosphate acetyltransferase and butyryltransferase family. Homohexamer.

The protein resides in the cytoplasm. The catalysed reaction is acetyl-CoA + phosphate = acetyl phosphate + CoA. It functions in the pathway metabolic intermediate biosynthesis; acetyl-CoA biosynthesis; acetyl-CoA from acetate: step 2/2. In terms of biological role, involved in acetate metabolism. The chain is Phosphate acetyltransferase (pta) from Nitratidesulfovibrio vulgaris (strain ATCC 29579 / DSM 644 / CCUG 34227 / NCIMB 8303 / VKM B-1760 / Hildenborough) (Desulfovibrio vulgaris).